The primary structure comprises 201 residues: Recombination protein RecR (201 aa).

Residues 60–75 (CSCCGNVDTIDPCTVC) form a C4-type zinc finger. One can recognise a Toprim domain in the interval 83 to 178 (AVIIVVEDVA…RITRLAHGVP (96 aa)).

This sequence belongs to the RecR family.

In terms of biological role, may play a role in DNA repair. It seems to be involved in an RecBC-independent recombinational process of DNA repair. It may act with RecF and RecO. The chain is Recombination protein RecR from Rhizobium meliloti (strain 1021) (Ensifer meliloti).